Consider the following 404-residue polypeptide: Druantia protein DruA (404 aa).

It localises to the cytoplasm. Functionally, component of antiviral defense system Druantia type I, composed of DruA, DruB, DruC, DruD and DruE. Expression of Druantia in E.coli (strain MG1655) confers resistance to phage lambda, SECphi18, SECphi27 and T4. This is Druantia protein DruA from Escherichia coli (strain UMEA 4076-1).